We begin with the raw amino-acid sequence, 2004 residues long: Histone acetyltransferase KAT6A (2004 aa).

Residues 1 to 77 form the SAMD1-like winged helix (WH) domain; the sequence is MVKLANPLYT…LNSYKDPDNP (77 aa). A required for activation of RUNX1-1 region spans residues 1 to 144; it reads MVKLANPLYT…FGGSAASGFH (144 aa). Positions 52–166 are required for nuclear localization; that stretch reads ELSVKDGTIL…HGRLLKDGPL (115 aa). Residues 95–171 form the H15 domain; it reads QNVDWNKLIK…KDGPLYRLNT (77 aa). An interaction with PML region spans residues 144–664; it reads HQQLRLAIKR…RKGYGRFLID (521 aa). Lysine 172 bears the N6-acetyllysine mark. 2 consecutive PHD-type zinc fingers follow at residues 206 to 265 and 259 to 313; these read IPIC…CKTC and CIEC…CRPR. Positions 312-664 are interaction with RUNX1-1; the sequence is PRKKGRKLLQ…RKGYGRFLID (353 aa). The interval 334-375 is disordered; it reads PIGRPKNRLKKQNTVSKGPFSKVRTGPGRGRKRKITLSSQSA. Residues lysine 350 and lysine 355 each carry the N6-acetyllysine modification. At threonine 369 the chain carries Phosphothreonine; by PKB/AKT1. A Phosphoserine modification is found at serine 420. Residues 441 to 464 are disordered; it reads KRGNRKSSTSDWPTDNQDGWDGKQ. A compositionally biased stretch (polar residues) spans 446–457; that stretch reads KSSTSDWPTDNQ. Residue serine 473 is modified to Phosphoserine. The catalytic stretch occupies residues 488 to 778; the sequence is IQEQALQKVG…VDPECLRWTP (291 aa). Residues 504–778 enclose the MYST-type HAT domain; sequence PQVRCPSVIE…VDPECLRWTP (275 aa). The mediates interaction with BRPF1, required for histone H3 acetyltransferase activity stretch occupies residues 507-810; the sequence is RCPSVIEFGK…EPQCQERELE (304 aa). The C2HC MYST-type zinc-finger motif lies at 537–562; sequence LYLCEFCLKYMKSRTILQQHMKKCGW. At lysine 604 the chain carries N6-acetyllysine; by autocatalysis. Acetyl-CoA-binding positions include 645-649 and 654-660; these read SCIMI and QRKGYGR. The active-site Proton donor/acceptor is glutamate 680. Position 684 (serine 684) interacts with acetyl-CoA. 3 disordered regions span residues 785-1445, 1461-1621, and 1637-1721; these read VVSE…AYQD, QADE…MMQQ, and SCVV…MEIP. A phosphoserine mark is found at serine 787 and serine 812. The segment covering 787–803 has biased composition (acidic residues); that stretch reads SEEEEEEAEEGENEEPQ. The residue at position 815 (lysine 815) is an N6-acetyllysine. The segment covering 817 to 836 has biased composition (basic and acidic residues); the sequence is VSHENKEQDSYSVESEKKPE. Lysine 834 participates in a covalent cross-link: Glycyl lysine isopeptide (Lys-Gly) (interchain with G-Cter in SUMO2). A compositionally biased stretch (basic residues) spans 864 to 873; sequence RRGRWGRKNR. The span at 874-888 shows a compositional bias: basic and acidic residues; that stretch reads KTQERFGDKDSKLLL. Tyrosine 899 carries the phosphotyrosine modification. 2 stretches are compositionally biased toward basic and acidic residues: residues 931–942 and 953–980; these read GKPDLPKRRLSE and KSPEALKCRLTEGSERLPRRYSEGDRAV. 3 positions are modified to phosphoserine: serine 941, serine 954, and serine 974. Lysine 1007 carries the post-translational modification N6-acetyllysine. A compositionally biased stretch (basic residues) spans 1009 to 1030; that stretch reads TLKRKKPFLHRRRRVRKRKHHN. Low complexity predominate over residues 1031–1042; sequence SSVVTETISETT. Composition is skewed to acidic residues over residues 1043 to 1053 and 1065 to 1078; these read EVLDEPFEDSD and FEIDEEEEEEDENE. Phosphoserine occurs at positions 1089, 1090, and 1113. Over residues 1107–1118 the composition is skewed to acidic residues; that stretch reads EEEDEESDDADD. The span at 1146-1172 shows a compositional bias: basic residues; it reads LKKKKGWPKGKSRKPIHWKKRPGRKPG. Residues 1203 to 1223 show a composition bias toward basic and acidic residues; that stretch reads KIQESEETVEPKEDMPLPEER. Residues 1224–1245 show a composition bias toward acidic residues; sequence KEEEEMQAEAEEAEEGEEEDAA. Low complexity predominate over residues 1246–1262; it reads SSEVPAASPADSSNSPE. Over residues 1275-1287 the composition is skewed to basic and acidic residues; sequence EKPRVSEEQRQSE. Positions 1288–1305 are enriched in acidic residues; that stretch reads EEQQELEEPEPEEEEDAA. Composition is skewed to basic and acidic residues over residues 1323 to 1345, 1358 to 1367, and 1398 to 1420; these read HLESTKKKELEEQPTREDVKEEP, KSREKIKDKE, and EDSHTKEELIELKEEEEIPHSEL. A Glycyl lysine isopeptide (Lys-Gly) (interchain with G-Cter in SUMO2) cross-link involves residue lysine 1342. The segment covering 1481–1503 has biased composition (low complexity); that stretch reads SPISSVQSHPSQSVRSVSSPNVP. Residues 1508–1529 show a composition bias toward polar residues; sequence GYTQISPEQGSLSAPSMQNMET. The tract at residues 1517-1642 is interaction with RUNX1-2; it reads GSLSAPSMQN…KSPQSCVVER (126 aa). The interval 1517–1741 is interaction with PML; that stretch reads GSLSAPSMQN…YERIPGDFGA (225 aa). Residues 1534–1548 show a composition bias toward low complexity; it reads DVPSVSDHSQQVVDS. Residues 1556–1573 are compositionally biased toward polar residues; sequence IESTTENYENPSSYDSTM. Positions 1574–1621 are enriched in low complexity; it reads GGSICGNSSSQSSCSYGGLSSSSSLTQSSCVVTQQMASMGSSCSMMQQ. Over residues 1650 to 1699 the composition is skewed to pro residues; sequence QPPPPPPQQPQPPPPQPQPAPQPPPPQQQPQQQPQPQPQQPPPPPPPQQQ. Residues 1702-1712 are compositionally biased toward polar residues; that stretch reads LSQCSMNNSFT. Positions 1913-1948 are required for activation of RUNX1-2; the sequence is SMNMNTLNAMNSYRMTQPMMNSSYHSNPAYMNQTAQ.

It belongs to the MYST (SAS/MOZ) family. In terms of assembly, component of the MOZ/MORF complex composed at least of ING5, KAT6A, KAT6B, MEAF6 and one of BRPF1, BRD1/BRPF2 and BRPF3. Interacts with RUNX1; phosphorylation of RUNX1 enhances the interaction. Interacts with RUNX2. Interacts with p53/TP53. Interacts with PML (isoform PML-4) and this interaction positively regulates its acetylation activity towards p53/TP53. Post-translationally, autoacetylation at Lys-604 is required for proper function. Autoacetylated. Phosphorylation at Thr-369 by PKB/AKT1 inhibits its interaction with PML and negatively regulates its acetylation activity towards p53/TP53.

The protein localises to the nucleus. It is found in the nucleolus. Its subcellular location is the nucleoplasm. It localises to the PML body. It catalyses the reaction L-lysyl-[protein] + acetyl-CoA = N(6)-acetyl-L-lysyl-[protein] + CoA + H(+). Functionally, histone acetyltransferase that acetylates lysine residues in histone H3 and histone H4 (in vitro). Component of the MOZ/MORF complex which has a histone H3 acetyltransferase activity. May act as a transcriptional coactivator for RUNX1 and RUNX2. Acetylates p53/TP53 at 'Lys-120' and 'Lys-382' and controls its transcriptional activity via association with PML. The protein is Histone acetyltransferase KAT6A (KAT6A) of Homo sapiens (Human).